Here is a 214-residue protein sequence, read N- to C-terminus: MGQKTHPLGFRLGITQEHRSAWYANFNQYANLLKEDNQIRTYLNKLAKTASISNIQINRNGLSDQIQLNIETGRPGVLVGENGTGIKTLLSNIKKILPPNRQLTINIIEVEKVNLNASLIGDLVVEQLEDRVAFRKAIRKAMQSALDENVNGIKIQVSGRLNGAEIARSEWIREGRVPLQTLRADIDYATKEAHTIYGVLGVKVWLFKSEILAK.

A KH type-2 domain is found at 39-111 (IRTYLNKLAK…QLTINIIEVE (73 aa)).

It belongs to the universal ribosomal protein uS3 family. Part of the 30S ribosomal subunit.

It localises to the plastid. It is found in the chloroplast. This Trieres chinensis (Marine centric diatom) protein is Small ribosomal subunit protein uS3c (rps3).